Here is a 321-residue protein sequence, read N- to C-terminus: Annexin A5 (321 aa).

Annexin repeat units lie at residues 15–86 (FDAR…SLMR), 87–158 (PARI…VLLQ), 170–242 (ALVE…AVVK), and 246–317 (SVPA…LLCG).

It belongs to the annexin family.

Collagen-binding protein. The protein is Annexin A5 (ANXA5) of Gallus gallus (Chicken).